A 622-amino-acid chain; its full sequence is MPLDLKNYPLLTNINYPEDLRLLKKEQLPAFCNELRSFLLNTVSQTSGHLASGLGVVELTVALHYIYRTPFDNLIFDVGHQAYPHKILTGRRDKMGSIRNFKGLHPFPWREESEYDVLSVGHSSTSIGAALGMSIAAEKEQQGRKVVAVIGDGAITAGMAFEALNHAGSLHNDMLVVLNDNEMSISENVGALNNHLAKILSGDIYTQLREGSKKVLSNIPPVKELAKRTEEHLKGMISPATIFEEFGFNYIGPMDGHNVIDLVDTLRNMRSHSGPQFLHVMTKKGKGYKQAELDPIKYHAVPKFTPDQDLPKSPPSSATFSQVFGDWLNDMADQDNKLTAITPAMREGSGMVSFSKRHADKYYDVAIAEQHAVTLAAGMAIAGLNPVVAIYSTFLQRAYDQLIHDIAIQNLGVLFAIDRAGIVGADGPTHQGVFDLSFLRCVPNMIVMTPSDEQECRNMLYTGHMLNQPAAVRYPRGTGTGIEINKQMSRLTIGKAKVVKEGKNLAILCFGTFLQQAYSVAEKLNATLVDMRFVKPLDKELLDNLASTHKEFVTIEENSIAGGAGSAVNEYFMSQQIKTSVLNIGIPDRFIEQGTQQEIYTLLELDSAGIEKQIVSYYSHLK.

Residues H80 and 121-123 contribute to the thiamine diphosphate site; that span reads GHS. Residue D152 coordinates Mg(2+). Residues 153–154, N181, Y288, and E369 each bind thiamine diphosphate; that span reads GA. N181 serves as a coordination point for Mg(2+).

The protein belongs to the transketolase family. DXPS subfamily. In terms of assembly, homodimer. Mg(2+) is required as a cofactor. Requires thiamine diphosphate as cofactor.

The catalysed reaction is D-glyceraldehyde 3-phosphate + pyruvate + H(+) = 1-deoxy-D-xylulose 5-phosphate + CO2. It participates in metabolic intermediate biosynthesis; 1-deoxy-D-xylulose 5-phosphate biosynthesis; 1-deoxy-D-xylulose 5-phosphate from D-glyceraldehyde 3-phosphate and pyruvate: step 1/1. Its function is as follows. Catalyzes the acyloin condensation reaction between C atoms 2 and 3 of pyruvate and glyceraldehyde 3-phosphate to yield 1-deoxy-D-xylulose-5-phosphate (DXP). This is 1-deoxy-D-xylulose-5-phosphate synthase from Psychromonas ingrahamii (strain DSM 17664 / CCUG 51855 / 37).